The chain runs to 226 residues: Orotate phosphoribosyltransferase (226 aa).

5-phospho-alpha-D-ribose 1-diphosphate-binding positions include R107, K108, K111, and E133 to S141. T137 contributes to the orotate binding site.

The protein belongs to the purine/pyrimidine phosphoribosyltransferase family. PyrE subfamily. As to quaternary structure, homodimer. Requires Mg(2+) as cofactor.

The enzyme catalyses orotidine 5'-phosphate + diphosphate = orotate + 5-phospho-alpha-D-ribose 1-diphosphate. It functions in the pathway pyrimidine metabolism; UMP biosynthesis via de novo pathway; UMP from orotate: step 1/2. In terms of biological role, catalyzes the transfer of a ribosyl phosphate group from 5-phosphoribose 1-diphosphate to orotate, leading to the formation of orotidine monophosphate (OMP). This Ruegeria sp. (strain TM1040) (Silicibacter sp.) protein is Orotate phosphoribosyltransferase.